A 337-amino-acid polypeptide reads, in one-letter code: Anthranilate phosphoribosyltransferase (337 aa).

Residues Gly80, 83–84 (GD), Thr88, 90–93 (NIST), 108–116 (KHGNRAVSS), and Ser120 contribute to the 5-phospho-alpha-D-ribose 1-diphosphate site. Gly80 is a binding site for anthranilate. Residue Ser92 participates in Mg(2+) binding. Asn111 contacts anthranilate. Arg166 lines the anthranilate pocket. Asp224 and Glu225 together coordinate Mg(2+).

It belongs to the anthranilate phosphoribosyltransferase family. In terms of assembly, homodimer. Requires Mg(2+) as cofactor.

It catalyses the reaction N-(5-phospho-beta-D-ribosyl)anthranilate + diphosphate = 5-phospho-alpha-D-ribose 1-diphosphate + anthranilate. It participates in amino-acid biosynthesis; L-tryptophan biosynthesis; L-tryptophan from chorismate: step 2/5. In terms of biological role, catalyzes the transfer of the phosphoribosyl group of 5-phosphorylribose-1-pyrophosphate (PRPP) to anthranilate to yield N-(5'-phosphoribosyl)-anthranilate (PRA). The sequence is that of Anthranilate phosphoribosyltransferase from Anaeromyxobacter sp. (strain K).